A 181-amino-acid polypeptide reads, in one-letter code: UPF0228 protein MA_3117 (181 aa).

Belongs to the UPF0228 family.

The sequence is that of UPF0228 protein MA_3117 from Methanosarcina acetivorans (strain ATCC 35395 / DSM 2834 / JCM 12185 / C2A).